Reading from the N-terminus, the 47-residue chain is Lysis protein for colicin E7 (47 aa).

The first 19 residues, 1–19 (MKKITGIILLLLAAIILAA), serve as a signal peptide directing secretion. C20 carries the N-palmitoyl cysteine lipid modification. The S-diacylglycerol cysteine moiety is linked to residue C20.

Its subcellular location is the cell outer membrane. Lysis proteins are required for both colicin release and partial cell lysis. The polypeptide is Lysis protein for colicin E7 (lys) (Escherichia coli).